Consider the following 396-residue polypeptide: Inositol polyphosphate multikinase (396 aa).

Residues 1 to 13 (MAAEPPALRLRPP) are compositionally biased toward low complexity. The tract at residues 1–22 (MAAEPPALRLRPPGSTGDSPPV) is disordered. An N-acetylalanine modification is found at alanine 2. Serine 19 bears the Phosphoserine mark. Lysine 58 serves as a coordination point for ATP. A substrate-binding site is contributed by arginine 65. ATP is bound by residues 114–116 (EDV) and aspartate 127. Residues lysine 129, 143-150 (KIQQQVSK), and glutamine 179 each bind substrate. Residues 300 to 310 (RHRKLYAKKHQ) carry the Nuclear localization signal motif. Aspartate 365 provides a ligand contact to ATP.

Belongs to the inositol phosphokinase (IPK) family. Mg(2+) serves as cofactor.

The protein localises to the nucleus. The catalysed reaction is 1D-myo-inositol 1,4,5-trisphosphate + 2 ATP = 1D-myo-inositol 1,3,4,5,6-pentakisphosphate + 2 ADP + 2 H(+). It carries out the reaction 1D-myo-inositol 1,3,4,6-tetrakisphosphate + ATP = 1D-myo-inositol 1,3,4,5,6-pentakisphosphate + ADP + H(+). The enzyme catalyses 1-octadecanoyl-2-(5Z,8Z,11Z,14Z)-eicosatetraenoyl-sn-glycero-3-phospho-1D-myo-inositol 4,5-bisphosphate + ATP = 1-octadecanoyl-2-(5Z,8Z,11Z,14Z-eicosatetraenoyl)-sn-glycero-3-phospho-(1D-myo-inositol 3,4,5-triphosphate) + ADP + H(+). It catalyses the reaction a 1,2-diacyl-sn-glycero-3-phospho-(1D-myo-inositol-4,5-bisphosphate) + ATP = a 1,2-diacyl-sn-glycero-3-phospho-(1D-myo-inositol-3,4,5-trisphosphate) + ADP + H(+). The catalysed reaction is 1D-myo-inositol 1,4,5,6-tetrakisphosphate + ATP = 1D-myo-inositol 1,3,4,5,6-pentakisphosphate + ADP + H(+). It participates in phospholipid metabolism; phosphatidylinositol metabolism. Inositol phosphate kinase with a broad substrate specificity. Phosphorylates inositol 1,4,5-trisphosphate (Ins(1,4,5)P3) first to inositol 1,3,4,5-tetrakisphosphate and then to inositol 1,3,4,5,6-pentakisphosphate (Ins(1,3,4,5,6)P5). Phosphorylates inositol 1,3,4,6-tetrakisphosphate (Ins(1,3,4,6)P4). Phosphorylates inositol 1,4,5,6-tetrakisphosphate (Ins(1,4,5,6)P4). Phosphorylates glycero-3-phospho-1D-myo-inositol 4,5-bisphosphate to glycero-3-phospho-1D-myo-inositol 3,4,5-trisphosphate. Plays an important role in MLKL-mediated necroptosis via its role in the biosynthesis of inositol pentakisphosphate (InsP5) and inositol hexakisphosphate (InsP6). Binding of these highly phosphorylated inositol phosphates to MLKL mediates the release of an N-terminal auto-inhibitory region, leading to activation of the kinase. Essential for activated phospho-MLKL to oligomerize and localize to the cell membrane during necroptosis. Required for normal embryonic development, probably via its role in the biosynthesis of inositol 1,3,4,5,6-pentakisphosphate (Ins(1,3,4,5,6)P5) and inositol hexakisphosphate (InsP6). The polypeptide is Inositol polyphosphate multikinase (Ipmk) (Mus musculus (Mouse)).